A 275-amino-acid chain; its full sequence is MAIRIFAILFSIFSLATFAHAQEGTLERSDWRKFFSEFQAKGTIVVADERQADRAMLVFDPVRSKKRYSPASTFKIPHTLFALDAGAVRDEFQIFRWDGVNRGFAGHNQDQDLRSAMRNSTVWVYELFAKEIGDDKARRYLKKIDYGNADPSTSNGDYWIEGSLAISAQEQIAFLRKLYRNELPFRVEHQRLVKDLMIVEAGRNWILRAKTGWEGRMGWWVGWVEWPTGSVFFALNIDTPNRMDDLFKREAIVRAILRSIEALPPNPAVNSDAAR.

The N-terminal stretch at 1–21 (MAIRIFAILFSIFSLATFAHA) is a signal peptide. Serine 72 acts as the Acyl-ester intermediate in catalysis. Lysine 75 is subject to N6-carboxylysine. 210–212 (KTG) provides a ligand contact to substrate.

This sequence belongs to the class-D beta-lactamase family.

The enzyme catalyses a beta-lactam + H2O = a substituted beta-amino acid. This is an oxacillin-hydrolyzing beta-lactamase. The polypeptide is Beta-lactamase OXA-2 (bla) (Escherichia coli).